We begin with the raw amino-acid sequence, 315 residues long: ADP/ATP translocase 4 (315 aa).

Over methionine 1 to serine 19 the chain is Mitochondrial intermembrane. The Solcar 1 repeat unit spans residues serine 18–leucine 110. A helical transmembrane segment spans residues phenylalanine 20–glutamine 49. Over valine 50–asparagine 86 the chain is Mitochondrial matrix. The helical transmembrane segment at leucine 87 to phenylalanine 111 threads the bilayer. ADP contacts are provided by arginine 92 and lysine 104. Residues methionine 112–phenylalanine 121 lie on the Mitochondrial intermembrane side of the membrane. The chain crosses the membrane as a helical span at residues tryptophan 122–valine 142. 2 Solcar repeats span residues arginine 123–leucine 213 and threonine 220–phenylalanine 307. Residues valine 143–glycine 190 lie on the Mitochondrial matrix side of the membrane. A helical transmembrane segment spans residues valine 191–lysine 211. Residues glycine 212–phenylalanine 222 are Mitochondrial intermembrane-facing. The chain crosses the membrane as a helical span at residues leucine 223–phenylalanine 243. Residues aspartate 244–glycine 283 lie on the Mitochondrial matrix side of the membrane. ADP is bound at residue arginine 247. Residues arginine 247–methionine 252 are important for transport activity. The short motif at arginine 247 to methionine 252 is the Nucleotide carrier signature motif element. The chain crosses the membrane as a helical span at residues alanine 284–tyrosine 301. Topologically, residues aspartate 302 to arginine 315 are mitochondrial intermembrane.

The protein belongs to the mitochondrial carrier (TC 2.A.29) family. As to quaternary structure, monomer.

It localises to the mitochondrion inner membrane. The protein resides in the membrane. It is found in the cell projection. The protein localises to the cilium. Its subcellular location is the flagellum membrane. The enzyme catalyses ADP(in) + ATP(out) = ADP(out) + ATP(in). It carries out the reaction dATP(out) + ADP(in) = dATP(in) + ADP(out). It catalyses the reaction dADP(in) + ADP(out) = dADP(out) + ADP(in). The catalysed reaction is H(+)(in) = H(+)(out). The matrix-open state (m-state) is inhibited by the membrane-permeable bongkrekic acid (BKA). The cytoplasmic-open state (c-state) is inhibited by the membrane-impermeable toxic inhibitor carboxyatractyloside (CATR). Proton transporter activity is inhibited by ADP:ATP antiporter activity. Functionally, ADP:ATP antiporter that mediates import of ADP into the mitochondrial matrix for ATP synthesis, and export of ATP out to fuel the cell. Cycles between the cytoplasmic-open state (c-state) and the matrix-open state (m-state): operates by the alternating access mechanism with a single substrate-binding site intermittently exposed to either the cytosolic (c-state) or matrix (m-state) side of the inner mitochondrial membrane. Specifically required during spermatogenesis, probably to mediate ADP:ATP exchange in spermatocytes. Large ATP supplies from mitochondria may be critical for normal progression of spermatogenesis during early stages of meiotic prophase I, including DNA double-strand break repair and chromosomal synapsis. In addition to its ADP:ATP antiporter activity, also involved in mitochondrial uncoupling and mitochondrial permeability transition pore (mPTP) activity. Plays a role in mitochondrial uncoupling by acting as a proton transporter: proton transport uncouples the proton flows via the electron transport chain and ATP synthase to reduce the efficiency of ATP production and cause mitochondrial thermogenesis. Proton transporter activity is inhibited by ADP:ATP antiporter activity, suggesting that SLC25A31/ANT4 acts as a master regulator of mitochondrial energy output by maintaining a delicate balance between ATP production (ADP:ATP antiporter activity) and thermogenesis (proton transporter activity). Proton transporter activity requires free fatty acids as cofactor, but does not transport it. Among nucleotides, may also exchange ADP for dATP and dADP. Also plays a key role in mPTP opening, a non-specific pore that enables free passage of the mitochondrial membranes to solutes of up to 1.5 kDa, and which contributes to cell death. It is however unclear if SLC25A31/ANT4 constitutes a pore-forming component of mPTP or regulates it. This Macaca fascicularis (Crab-eating macaque) protein is ADP/ATP translocase 4.